The primary structure comprises 43 residues: Mu-conotoxin-like CalTx 12.2.1E (43 aa).

Arginine 1 is a propeptide. Intrachain disulfides connect cysteine 4/cysteine 16, cysteine 11/cysteine 24, cysteine 18/cysteine 29, and cysteine 23/cysteine 35. Tryptophan 31 bears the 6'-bromotryptophan mark. Position 36 is a 4-hydroxyproline (proline 36). Position 40 is a 6'-bromotryptophan (tryptophan 40).

As to expression, expressed by the venom duct.

It localises to the secreted. In terms of biological role, mu-conotoxins block voltage-gated sodium channels. This toxin reversibly blocks voltage-gated sodium channel in cephalopods, with no alteration in the voltage dependence of sodium conductance or on the kinetics of inactivation. The protein is Mu-conotoxin-like CalTx 12.2.1E of Californiconus californicus (California cone).